The following is a 199-amino-acid chain: Recombination protein RecR (199 aa).

A C4-type zinc finger spans residues 56-71 (CRSCFNVAQSELCRIC). One can recognise a Toprim domain in the interval 79 to 174 (ALICVVEEPK…RVTRLASGLP (96 aa)).

Belongs to the RecR family.

Functionally, may play a role in DNA repair. It seems to be involved in an RecBC-independent recombinational process of DNA repair. It may act with RecF and RecO. The sequence is that of Recombination protein RecR from Frankia alni (strain DSM 45986 / CECT 9034 / ACN14a).